A 694-amino-acid polypeptide reads, in one-letter code: MSDQEFGLDAIRNIGIMAHIDAGKTTTTERILFYAGRTHKIGEVHEGGATMDWMEQEQERGITITSAATTVFWLGAKINIIDTPGHVDFTIEVERSLRVLDGAVAVFDAVSGVEPQSETVWRQANKYGVPRIAFVNKMDRMGANYFGAVESMREKLGANAIPVHCPIGSESQFVGMVDLISQKALYFLEETLGAKWEERKIPEDLQEQCATLRMQLLEELATVDESNEAFMEKVLENPDSITEEEIHTVMRKGVIEGKINPVLCGSAFKNKGVQQLLDVIVKWLPSPLDRGNVRGINLKTGEEVSLKPSKDGPLAALAFKIMTDPYVGRITFIRIYSGTLKKGSAILNSTKDKKERISRLLEMHANERTDRDEFTVGDIGACVGLKFSVTGDTLCDENQEIVLERIEAPEPVIDMAIEPKSKGDREKLAQALSALSEEDPTFRVSTNEETGQTIISGMGELHLDILRDRMIREFRVEANVGKPQVSYKETITKTSNSETKYVKQSGGRGQYAHVCLEIEPNEPGKGNEVVSKIVGGVIPKEYIPAVIKGVEEGLNSGVLAGYGLVDVKVSIVFGSYHEVDSSEMAFKICGSMAVKEACRKALPVILEPIMKVTVITPEDHLGDVIGDLNRRRGKILGQESSRNMAQVSAEVPLSEMFGYMTSLRSLTSGRATSTMEPAFFAKVPQKIQEEIVKK.

The tr-type G domain occupies 9-288 (DAIRNIGIMA…VIVKWLPSPL (280 aa)). GTP-binding positions include 18 to 25 (AHIDAGKT), 82 to 86 (DTPGH), and 136 to 139 (NKMD).

This sequence belongs to the TRAFAC class translation factor GTPase superfamily. Classic translation factor GTPase family. EF-G/EF-2 subfamily.

Its subcellular location is the cytoplasm. Its function is as follows. Catalyzes the GTP-dependent ribosomal translocation step during translation elongation. During this step, the ribosome changes from the pre-translocational (PRE) to the post-translocational (POST) state as the newly formed A-site-bound peptidyl-tRNA and P-site-bound deacylated tRNA move to the P and E sites, respectively. Catalyzes the coordinated movement of the two tRNA molecules, the mRNA and conformational changes in the ribosome. This is Elongation factor G from Chlamydia trachomatis serovar L2 (strain ATCC VR-902B / DSM 19102 / 434/Bu).